The primary structure comprises 585 residues: Beta-(1--&gt;2)glucan export ATP-binding/permease protein NdvA (585 aa).

Residues 21–301 (VGAIVIANIV…MKAFATQIFE (281 aa)) enclose the ABC transmembrane type-1 domain. Helical transmembrane passes span 22-42 (GAIV…PILF), 55-75 (VAPM…AFVL), 136-156 (QHLA…AMDV), 158-178 (LSLI…VVMS), 245-265 (LNRI…TVLV), and 269-289 (ELGV…IGRL). The ABC transporter domain maps to 335–569 (VEFRDISFDF…NGRFAALLRA (235 aa)). An ATP-binding site is contributed by 368 to 375 (GPTGAGKT).

This sequence belongs to the ABC transporter superfamily. Beta-(1--&gt;2)glucan exporter (TC 3.A.1.108.1) family. In terms of assembly, homodimer.

It is found in the cell inner membrane. The catalysed reaction is [(1-&gt;2)-beta-D-glucosyl](n)(in) + ATP + H2O = [(1-&gt;2)-beta-D-glucosyl](n)(out) + ADP + phosphate + H(+). Involved in beta-(1--&gt;2)glucan export which is required for nodulation of legume roots. May be involved in other classes of oligosaccharides export. Transmembrane domains (TMD) form a pore in the inner membrane and the ATP-binding domain (NBD) is responsible for energy generation. This Rhizobium meliloti (strain 1021) (Ensifer meliloti) protein is Beta-(1--&gt;2)glucan export ATP-binding/permease protein NdvA.